The chain runs to 1286 residues: X-linked retinitis pigmentosa GTPase regulator-interacting protein 1 (1286 aa).

Positions 144 to 193 (QVGHRQLHTAGAPVPEKPKRGPRDRLSYTAPPSFKEHATNENRGEVASKP) are disordered. 2 stretches are compositionally biased toward basic and acidic residues: residues 159–169 (EKPKRGPRDRL) and 177–189 (FKEH…RGEV). Residues 294–584 (KAQLTEVQEA…LEGILRSHDL (291 aa)) are a coiled coil. A C2 domain is found at 781 to 906 (GGRKAQEEEF…AKNESIKGDF (126 aa)). Disordered regions lie at residues 934-1008 (SFLK…RKHG) and 1058-1108 (EEEE…PMSQ). 3 stretches are compositionally biased toward basic and acidic residues: residues 940–960 (AQTK…EEKA), 988–998 (HGGERKEKEHQ), and 1070–1084 (KQKE…KESS). Polar residues predominate over residues 1085–1096 (EQGSEVSEAQTT). Positions 1091 to 1281 (SEAQTTDSDD…VLHAIYKEMT (191 aa)) are interaction with RPGR.

The protein belongs to the RPGRIP1 family. Forms homodimers and elongated homopolymers. Interacts with RPGR. Interacts with NPHP4. Interacts with NEK4. Interacts with SPATA7. Interacts with CEP290/NPHP6; mediating the association between RPGR and CEP290/NPHP6. In terms of tissue distribution, strong expression in retina, with weaker expression in testis. Expressed in other neurons such as amacrine cells. Colocalizes with RGPR in the outer segment of rod photoreceptors and cone outer segments.

The protein localises to the cell projection. The protein resides in the cilium. Functionally, may function as scaffolding protein. Required for normal location of RPGR at the connecting cilium of photoreceptor cells. Required for normal disk morphogenesis and disk organization in the outer segment of photoreceptor cells and for survival of photoreceptor cells. The sequence is that of X-linked retinitis pigmentosa GTPase regulator-interacting protein 1 (RPGRIP1) from Homo sapiens (Human).